The chain runs to 475 residues: Exodeoxyribonuclease 7 large subunit (475 aa).

The tract at residues 452–475 is disordered; the sequence is DHGLNRSSKSKRIKSKQDDQGTLF. Residues 466-475 are compositionally biased toward basic and acidic residues; that stretch reads SKQDDQGTLF.

Belongs to the XseA family. As to quaternary structure, heterooligomer composed of large and small subunits.

The protein localises to the cytoplasm. The enzyme catalyses Exonucleolytic cleavage in either 5'- to 3'- or 3'- to 5'-direction to yield nucleoside 5'-phosphates.. Its function is as follows. Bidirectionally degrades single-stranded DNA into large acid-insoluble oligonucleotides, which are then degraded further into small acid-soluble oligonucleotides. The polypeptide is Exodeoxyribonuclease 7 large subunit (Bartonella quintana (strain Toulouse) (Rochalimaea quintana)).